The sequence spans 256 residues: Hemolymph lipopolysaccharide-binding protein (256 aa).

A signal peptide spans 1-21 (MMNTRALLPLSVLLMATLCLC). A propeptide spanning residues 22–33 (ELPIPILQRFVR) is cleaved from the precursor. N56 carries an N-linked (GlcNAc...) asparagine glycan. Residues 146–256 (IICQQEGGHL…KLPFVCEVEL (111 aa)) form the C-type lectin domain. Cystine bridges form between C148–C252 and C230–C244.

Hemolymph.

The protein resides in the secreted. In terms of biological role, participates probably in the elimination of foreign substances invading the insect abdominal cavity, and in trapping intracellular symbionts, when they leak from the mycetomes into the hemolymph. This is Hemolymph lipopolysaccharide-binding protein from Periplaneta americana (American cockroach).